A 321-amino-acid polypeptide reads, in one-letter code: Cytochrome c biogenesis protein CcsA (321 aa).

A run of 8 helical transmembrane segments spans residues 17 to 37, 48 to 68, 71 to 91, 98 to 118, 143 to 163, 225 to 245, 259 to 273, and 286 to 306; these read VVSI…FVGL, TFFC…HLPI, LYES…VPYF, LSTI…WGLL, MVSG…LLVI, ILSI…VWAN, TWAF…IYFH, and AIVA…VNLL.

It belongs to the CcmF/CycK/Ccl1/NrfE/CcsA family. May interact with Ccs1.

Its subcellular location is the plastid. The protein localises to the chloroplast thylakoid membrane. Functionally, required during biogenesis of c-type cytochromes (cytochrome c6 and cytochrome f) at the step of heme attachment. This is Cytochrome c biogenesis protein CcsA from Populus alba (White poplar).